The chain runs to 256 residues: Ubiquinone/menaquinone biosynthesis C-methyltransferase UbiE (256 aa).

Over residues 1–12 (MTDPRKGDHAEP) the composition is skewed to basic and acidic residues. The disordered stretch occupies residues 1 to 21 (MTDPRKGDHAEPTTHFGYQDV). Residues Thr-79, Asp-100, and 128–129 (DA) contribute to the S-adenosyl-L-methionine site.

Belongs to the class I-like SAM-binding methyltransferase superfamily. MenG/UbiE family.

The enzyme catalyses a 2-demethylmenaquinol + S-adenosyl-L-methionine = a menaquinol + S-adenosyl-L-homocysteine + H(+). It carries out the reaction a 2-methoxy-6-(all-trans-polyprenyl)benzene-1,4-diol + S-adenosyl-L-methionine = a 5-methoxy-2-methyl-3-(all-trans-polyprenyl)benzene-1,4-diol + S-adenosyl-L-homocysteine + H(+). It participates in quinol/quinone metabolism; menaquinone biosynthesis; menaquinol from 1,4-dihydroxy-2-naphthoate: step 2/2. Its pathway is cofactor biosynthesis; ubiquinone biosynthesis. Functionally, methyltransferase required for the conversion of demethylmenaquinol (DMKH2) to menaquinol (MKH2) and the conversion of 2-polyprenyl-6-methoxy-1,4-benzoquinol (DDMQH2) to 2-polyprenyl-3-methyl-6-methoxy-1,4-benzoquinol (DMQH2). The polypeptide is Ubiquinone/menaquinone biosynthesis C-methyltransferase UbiE (Pseudomonas entomophila (strain L48)).